A 121-amino-acid chain; its full sequence is Protein yippee-like 5 (121 aa).

One can recognise a Yippee domain in the interval 13–110 (RLFSCANCDA…LERALVRESE (98 aa)). Zn(2+) contacts are provided by C17, C20, C73, and C76. Position 118 is a phosphoserine (S118).

This sequence belongs to the yippee family. In terms of assembly, identified in the CTLH complex that contains GID4, RANBP9 and/or RANBP10, MKLN1, MAEA, RMND5A (or alternatively its paralog RMND5B), GID8, ARMC8, WDR26 and YPEL5. Within this complex, MAEA, RMND5A (or alternatively its paralog RMND5B), GID8, WDR26, and RANBP9 and/or RANBP10 form the catalytic core, while GID4, MKLN1, ARMC8 and YPEL5 have ancillary roles. Interacts with RANBP9 and RANBP10.

It localises to the nucleus. The protein localises to the cytoplasm. The protein resides in the cytoskeleton. Its subcellular location is the microtubule organizing center. It is found in the centrosome. It localises to the spindle pole. The protein localises to the midbody. In terms of biological role, component of the CTLH E3 ubiquitin-protein ligase complex that selectively accepts ubiquitin from UBE2H and mediates ubiquitination and subsequent proteasomal degradation of the transcription factor HBP1. Required for normal cell proliferation. The sequence is that of Protein yippee-like 5 (YPEL5) from Macaca fascicularis (Crab-eating macaque).